We begin with the raw amino-acid sequence, 465 residues long: MNKENKLIPGLPSGFEDRWGKKLILKKKLINTIEANFVKFGFGALETPSFEISENIGSFLADDDSNPMSDVFSFKDGEKNITLRYDLSSPLARFVAQNNQELPLPYKRYQMGDVWRNEKAGNARYRSFLQCDADIVGNVNPAQANAELCNLIASTLLACGLKKDQFVVNISNRKIVQGLIEDLKISDDKKIKVMRAIDKLDKPGFGLRGVEDLLKEERVDASGAVTKGANLTDDQASQIINFLKVKDLKELKENLKNPLSQEGIKELEDLLEIVSYGDYLDQIKTNFTIVRGLAYYDGFCVETNLNFKAKNSKGKEVDIGSICSGGQYNKLISRFKGVDIPGTGMSFGVDRLLFAMMQLDQIEVDEKKPVIICVMDEKYLKNYYEILKVLRDNNINSEIFLDSKKNLGKQLTYANKKQCPVAVICGENEFKDNTITLKNLLGVKGENNQLTFPKENLINEIKKFI.

The protein belongs to the class-II aminoacyl-tRNA synthetase family. As to quaternary structure, homodimer.

The protein localises to the cytoplasm. The catalysed reaction is tRNA(His) + L-histidine + ATP = L-histidyl-tRNA(His) + AMP + diphosphate + H(+). This Pelagibacter ubique (strain HTCC1062) protein is Histidine--tRNA ligase (hisS).